Here is a 280-residue protein sequence, read N- to C-terminus: Hydrolase MT0498 (280 aa).

The region spanning 1 to 251 (MRIALAQIRS…PQLLVADIDV (251 aa)) is the CN hydrolase domain. Glutamate 40 acts as the Proton acceptor in catalysis. The active-site Proton donor is lysine 110. The Nucleophile role is filled by cysteine 146.

The protein belongs to the carbon-nitrogen hydrolase superfamily. NIT1/NIT2 family.

This Mycobacterium tuberculosis (strain CDC 1551 / Oshkosh) protein is Hydrolase MT0498.